The sequence spans 814 residues: Putative serine/threonine-protein kinase-like protein CCR3 (814 aa).

The first 30 residues, 1–30 (MKRFINSTVTFSVTVTIAVIIFFLLSPVTS), serve as a signal peptide directing secretion. Residues asparagine 6, asparagine 68, asparagine 136, asparagine 215, asparagine 226, asparagine 251, asparagine 260, asparagine 275, asparagine 299, and asparagine 309 are each glycosylated (N-linked (GlcNAc...) asparagine). Residues 31–393 (LGSGSTYAVV…SSPPSKALTR (363 aa)) are Extracellular-facing. Positions 366 to 381 (SQFPLPPPPPPPPPSP) are enriched in pro residues. The interval 366–388 (SQFPLPPPPPPPPPSPSTSSPPS) is disordered. The chain crosses the membrane as a helical span at residues 394–414 (GLLAFAIVGSVGAFAGICSVV). At 415 to 814 (YCLWTGVCLG…SSGICSIVSD (400 aa)) the chain is on the cytoplasmic side. The interval 433-478 (QPTITRGGSNSRSNSSNSRSLSIRRQGSRMLSMRRQRSGTSSMKHA) is disordered. The span at 441-457 (SNSRSNSSNSRSLSIRR) shows a compositional bias: low complexity. The region spanning 496 to 794 (FSLENKIGSG…DIVGNLERAL (299 aa)) is the Protein kinase domain. Residues 502 to 510 (IGSGSFGVV) and lysine 524 contribute to the ATP site. The active-site Proton acceptor is the aspartate 631.

The protein belongs to the protein kinase superfamily. Ser/Thr protein kinase family. As to quaternary structure, homodimer. In terms of tissue distribution, expressed in roots, leaves, shoot apical meristems (SAM), and floral buds.

It localises to the membrane. The enzyme catalyses L-seryl-[protein] + ATP = O-phospho-L-seryl-[protein] + ADP + H(+). It carries out the reaction L-threonyl-[protein] + ATP = O-phospho-L-threonyl-[protein] + ADP + H(+). In terms of biological role, serine/threonine-protein kinase. The sequence is that of Putative serine/threonine-protein kinase-like protein CCR3 (CCR3) from Arabidopsis thaliana (Mouse-ear cress).